A 163-amino-acid chain; its full sequence is Neurotrophin-3 (163 aa).

The first 3 residues, 1-3 (IQS), serve as a signal peptide directing secretion. The propeptide occupies 4–119 (TSMDQGILTE…VLNRTSRRKR (116 aa)). An N-linked (GlcNAc...) asparagine glycan is attached at N112.

It belongs to the NGF-beta family.

The protein localises to the secreted. Seems to promote the survival of visceral and proprioceptive sensory neurons. The protein is Neurotrophin-3 (NTF3) of Eryx conicus (Rough-scaled sand boa).